The primary structure comprises 113 residues: Hydrogenase maturation factor HybF (113 aa).

Residues His2 and Glu3 each contribute to the Ni(2+) site. Cys73, Cys76, Cys89, and Cys92 together coordinate Zn(2+).

The protein belongs to the HypA/HybF family. HybF subfamily.

Functionally, involved in the maturation of [NiFe] hydrogenases. Required for nickel insertion into the metal center of the hydrogenase. The chain is Hydrogenase maturation factor HybF from Proteus vulgaris.